The primary structure comprises 143 residues: Interleukin-3 (143 aa).

A signal peptide spans 1-23 (MSSFPILHLLLLLLGCQVPQAQG). Residue Asn79 is glycosylated (N-linked (GlcNAc...) asparagine).

The protein belongs to the IL-3 family. As to quaternary structure, monomer.

It localises to the secreted. Granulocyte/macrophage colony-stimulating factors are cytokines that act in hematopoiesis by controlling the production, differentiation, and function of 2 related white cell populations of the blood, the granulocytes and the monocytes-macrophages. Its function is as follows. This CSF induces granulocytes, macrophages, mast cells, stem cells, erythroid cells, eosinophils and megakaryocytes. In Canis lupus familiaris (Dog), this protein is Interleukin-3 (IL3).